Reading from the N-terminus, the 357-residue chain is 3-isopropylmalate dehydrogenase (357 aa).

76 to 89 (GPKWDNEPSHNRPE) contacts NAD(+). The substrate site is built by Arg-96, Arg-106, Arg-135, and Asp-223. Residues Asp-223, Asp-247, and Asp-251 each coordinate Mg(2+). 281–293 (GSAPDIAGQDKAN) serves as a coordination point for NAD(+).

This sequence belongs to the isocitrate and isopropylmalate dehydrogenases family. LeuB type 1 subfamily. As to quaternary structure, homodimer. The cofactor is Mg(2+). It depends on Mn(2+) as a cofactor.

It is found in the cytoplasm. It carries out the reaction (2R,3S)-3-isopropylmalate + NAD(+) = 4-methyl-2-oxopentanoate + CO2 + NADH. It functions in the pathway amino-acid biosynthesis; L-leucine biosynthesis; L-leucine from 3-methyl-2-oxobutanoate: step 3/4. Its function is as follows. Catalyzes the oxidation of 3-carboxy-2-hydroxy-4-methylpentanoate (3-isopropylmalate) to 3-carboxy-4-methyl-2-oxopentanoate. The product decarboxylates to 4-methyl-2 oxopentanoate. This is 3-isopropylmalate dehydrogenase from Helicobacter hepaticus (strain ATCC 51449 / 3B1).